A 1722-amino-acid polypeptide reads, in one-letter code: MRTGWATPRRPAGLLMLLFWFFDLAEPSGRAANDPFTIVHGNTGKCIKPVYGWIVADDCDETEDKLWKWVSQHRLFHLHSQKCLGLDITKSVNELRMFSCDSSAMLWWKCEHHSLYGAARYRLALKDGHGTAISNASDVWKKGGSEESLCDQPYHEIYTRDGNSYGRPCEFPFLIDGTWHHDCILDEDHSGPWCATTLNYEYDRKWGICLKPENGCEDNWEKNEQFGSCYQFNTQTALSWKEAYVSCQNQGADLLSINSAAELTYLKEKEGIAKIFWIGLNQLYSARGWEWSDHKPLNFLNWDPDRPSAPTIGGSSCARMDAESGLWQSFSCEAQLPYVCRKPLNNTVELTDVWTYSDTRCDAGWLPNNGFCYLLVNESNSWDKAHAKCKAFSSDLISIHSLADVEVVVTKLHNEDIKEEVWIGLKNINIPTLFQWSDGTEVTLTYWDENEPNVPYNKTPNCVSYLGELGQWKVQSCEEKLKYVCKRKGEKLNDASSDKMCPPDEGWKRHGETCYKIYEDEVPFGTNCNLTITSRFEQEYLNDLMKKYDKSLRKYFWTGLRDVDSCGEYNWATVGGRRRAVTFSNWNFLEPASPGGCVAMSTGKSVGKWEVKDCRSFKALSICKKMSGPLGPEEASPKPDDPCPEGWQSFPASLSCYKVFHAERIVRKRNWEEAERFCQALGAHLSSFSHVDEIKEFLHFLTDQFSGQHWLWIGLNKRSPDLQGSWQWSDRTPVSTIIMPNEFQQDYDIRDCAAVKVFHRPWRRGWHFYDDREFIYLRPFACDTKLEWVCQIPKGRTPKTPDWYNPDRAGIHGPPLIIEGSEYWFVADLHLNYEEAVLYCASNHSFLATITSFVGLKAIKNKIANISGDGQKWWIRISEWPIDDHFTYSRYPWHRFPVTFGEECLYMSAKTWLIDLGKPTDCSTKLPFICEKYNVSSLEKYSPDSAAKVQCSEQWIPFQNKCFLKIKPVSLTFSQASDTCHSYGGTLPSVLSQIEQDFITSLLPDMEATLWIGLRWTAYEKINKWTDNRELTYSNFHPLLVSGRLRIPENFFEEESRYHCALILNLQKSPFTGTWNFTSCSERHFVSLCQKYSEVKSRQTLQNASETVKYLNNLYKIIPKTLTWHSAKRECLKSNMQLVSITDPYQQAFLSVQALLHNSSLWIGLFSQDDELNFGWSDGKRLHFSRWAETNGQLEDCVVLDTDGFWKTVDCNDNQPGAICYYSGNETEKEVKPVDSVKCPSPVLNTPWIPFQNCCYNFIITKNRHMATTQDEVHTKCQKLNPKSHILSIRDEKENNFVLEQLLYFNYMASWVMLGITYRNKSLMWFDKTPLSYTHWRAGRPTIKNEKFLAGLSTDGFWDIQTFKVIEEAVYFHQHSILACKIEMVDYKEEYNTTLPQFMPYEDGIYSVIQKKVTWYEALNMCSQSGGHLASVHNQNGQLFLEDIVKRDGFPLWVGLSSHDGSESSFEWSDGSTFDYIPWKGQTSPGNCVLLDPKGTWKHEKCNSVKDGAICYKPTKSKKLSRLTYSSRCPAAKENGSRWIQYKGHCYKSDQALHSFSEAKKLCSKHDHSATIVSIKDEDENKFVSRLMRENNNITMRVWLGLSQHSVDQSWSWLDGSEVTFVKWENKSKSGVGRCSMLIASNETWKKVECEHGFGRVVCKVPLGPDYTAIAIIVATLSILVLMGGLIWFLFQRHRLHLAGFSSVRYAQGVNEDEIMLPSFHD.

The N-terminal stretch at 1 to 27 (MRTGWATPRRPAGLLMLLFWFFDLAEP) is a signal peptide. At 28–1666 (SGRAANDPFT…VVCKVPLGPD (1639 aa)) the chain is on the extracellular side. One can recognise a Ricin B-type lectin domain in the interval 33–156 (NDPFTIVHGN…ESLCDQPYHE (124 aa)). N-linked (GlcNAc...) asparagine glycosylation is present at asparagine 135. The region spanning 164-211 (SYGRPCEFPFLIDGTWHHDCILDEDHSGPWCATTLNYEYDRKWGICLK) is the Fibronectin type-II domain. 4 disulfide bridges follow: cysteine 169-cysteine 194, cysteine 183-cysteine 209, cysteine 247-cysteine 340, and cysteine 317-cysteine 332. Residues 225-341 (QFGSCYQFNT…CEAQLPYVCR (117 aa)) enclose the C-type lectin 1 domain. Asparagine 345 and asparagine 377 each carry an N-linked (GlcNAc...) asparagine glycan. 4 C-type lectin domains span residues 368–486 (NNGF…YVCK), 493–625 (NDAS…ICKK), 652–778 (ASLS…IYLR), and 818–931 (IEGS…FICE). 2 cysteine pairs are disulfide-bonded: cysteine 389–cysteine 485 and cysteine 462–cysteine 477. N-linked (GlcNAc...) asparagine glycosylation occurs at asparagine 529. The cysteines at positions 597 and 614 are disulfide-linked. Cystine bridges form between cysteine 840/cysteine 930 and cysteine 904/cysteine 922. 2 N-linked (GlcNAc...) asparagine glycosylation sites follow: asparagine 843 and asparagine 865. Tyrosine 933 carries the phosphotyrosine modification. N-linked (GlcNAc...) asparagine glycans are attached at residues asparagine 934, asparagine 1076, and asparagine 1103. The C-type lectin 6 domain maps to 958-1091 (FQNKCFLKIK…ERHFVSLCQK (134 aa)). Cysteine 1060 and cysteine 1080 form a disulfide bridge. The C-type lectin 7 domain maps to 1110–1222 (YLNNLYKIIP…DNQPGAICYY (113 aa)). The cysteines at positions 1197 and 1211 are disulfide-linked. Asparagine 1225, asparagine 1320, and asparagine 1392 each carry an N-linked (GlcNAc...) asparagine glycan. Residues 1251–1374 (FQNCCYNFII…VIEEAVYFHQ (124 aa)) enclose the C-type lectin 8 domain. C-type lectin domains follow at residues 1401–1513 (YEDG…ICYK) and 1542–1661 (YKGH…VCKV). The cysteines at positions 1488 and 1502 are disulfide-linked. N-linked (GlcNAc...) asparagine glycans are attached at residues asparagine 1593 and asparagine 1626. A disulfide bond links cysteine 1635 and cysteine 1650. Residues 1667–1691 (YTAIAIIVATLSILVLMGGLIWFLF) form a helical membrane-spanning segment. Residues 1692 to 1722 (QRHRLHLAGFSSVRYAQGVNEDEIMLPSFHD) lie on the Cytoplasmic side of the membrane. Serine 1703 and serine 1719 each carry phosphoserine.

In terms of processing, N-glycosylated. Expressed in spleen, thymus, colon and peripheral blood lymphocytes. Detected in myeloid and B-lymphoid cell lines. Isoform 2 and isoform 3 are expressed in malignant Hodgkin lymphoma cells called Hodgkin and Reed-Sternberg (HRS) cells.

It localises to the membrane. In terms of biological role, acts as an endocytic receptor to direct captured antigens from the extracellular space to a specialized antigen-processing compartment. Causes reduced proliferation of B-lymphocytes. This is Lymphocyte antigen 75 (LY75) from Homo sapiens (Human).